We begin with the raw amino-acid sequence, 229 residues long: Translin (229 aa).

Residues 86–90 are DNA/RNA binding; it reads RFHEH. Residues 177-198 form a leucine-zipper region; it reads LDSGFRLLNLKNDSLRKRYDGL.

The protein belongs to the translin family. Ring-shaped heterooctamer of six TSN and two TSNAX subunits, DNA/RNA binding occurs inside the ring.

The protein resides in the cytoplasm. The protein localises to the nucleus. In terms of biological role, exhibits both single-stranded and double-stranded endoribonuclease activity. May act as an activator of RNA-induced silencing complex (RISC) by facilitating endonucleolytic cleavage of the siRNA passenger strand. Functionally, DNA-binding protein that specifically recognizes consensus sequences at the breakpoint junctions in chromosomal translocations, mostly involving immunoglobulin (Ig)/T-cell receptor gene segments. Seems to recognize single-stranded DNA ends generated by staggered breaks occurring at recombination hot spots. The chain is Translin (TSN) from Gallus gallus (Chicken).